A 167-amino-acid chain; its full sequence is Putative NADH-quinone oxidoreductase subunit B 2 (167 aa).

This sequence belongs to the complex I 20 kDa subunit family. As to quaternary structure, NDH-1 is composed of 14 different subunits. Subunits NuoB, C, D, E, F, and G constitute the peripheral sector of the complex.

It localises to the cell inner membrane. It catalyses the reaction a quinone + NADH + 5 H(+)(in) = a quinol + NAD(+) + 4 H(+)(out). In terms of biological role, NDH-1 shuttles electrons from NADH, via FMN and iron-sulfur (Fe-S) centers, to quinones in the respiratory chain. Couples the redox reaction to proton translocation (for every two electrons transferred, four hydrogen ions are translocated across the cytoplasmic membrane), and thus conserves the redox energy in a proton gradient. In Burkholderia pseudomallei (strain 1710b), this protein is Putative NADH-quinone oxidoreductase subunit B 2.